Reading from the N-terminus, the 190-residue chain is Signal peptidase complex subunit 3 (190 aa).

The Cytoplasmic portion of the chain corresponds to 1 to 9; the sequence is MFNIVTRFQ. The chain crosses the membrane as a helical; Signal-anchor for type II membrane protein span at residues 10 to 32; sequence YAANQALTSSIIIAGIVIVSSLL. Topologically, residues 33 to 190 are lumenal; sequence QLYSNNAWSL…EYVDKKKEQK (158 aa).

The protein belongs to the SPCS3 family. As to quaternary structure, component of the signal peptidase complex (SPC) composed of a catalytic subunit SEC11 and three accessory subunits SPC1, SPC2 and SPC3. The complex induces a local thinning of the ER membrane which is used to measure the length of the signal peptide (SP) h-region of protein substrates. This ensures the selectivity of the complex towards h-regions shorter than 18-20 amino acids. SPC associates with the translocon complex.

Its subcellular location is the endoplasmic reticulum membrane. In terms of biological role, essential component of the signal peptidase complex (SPC) which catalyzes the cleavage of N-terminal signal sequences from nascent proteins as they are translocated into the lumen of the endoplasmic reticulum. Essential for the SPC catalytic activity, possibly by stabilizing and positioning the active center of the complex close to the lumenal surface. Essential for viability. In Debaryomyces hansenii (strain ATCC 36239 / CBS 767 / BCRC 21394 / JCM 1990 / NBRC 0083 / IGC 2968) (Yeast), this protein is Signal peptidase complex subunit 3 (SPC3).